The primary structure comprises 287 residues: Prohibitin-1 (287 aa).

The interaction with ATG8 stretch occupies residues 102–116 (VLQLPAIYQNLGLDY). An AIM motif is present at residues 109–112 (YQNL). The stretch at 180–224 (EFTKAVEQKQIAQQDAERAKFLVEKAEQERQASVIRAEGEAESAE) forms a coiled coil. A disordered region spans residues 264–287 (SQHSGGGNSESSGSPNSLLLNIGR). Over residues 272-287 (SESSGSPNSLLLNIGR) the composition is skewed to low complexity.

This sequence belongs to the prohibitin family. As to quaternary structure, the mitochondrial prohibitin complex consists of two subunits (PHB1 and PHB2). The subunits assemble into a membrane-associated ring-shaped supercomplex of approximately 1 mDa. The mitochondrial prohibitin complex interacts with the m-AAA protease, a heterohexamer composed of YTA12/RCA1 and YTA10/AFG3. The mitochondrial prohibitin complex interacts with ATG8 and the interaction may support mitophagosome assembly. The N-terminus is blocked.

Its subcellular location is the mitochondrion inner membrane. Its function is as follows. Prohibitin probably acts as a holdase/unfoldase for the stabilization of newly synthesized mitochondrial proteins. Involved in mitophagy; may act as an adapter for ATG8 that supports mitophagosome assembly. Negatively regulates the proteolytic processing of ATG32 via the i-AAA protease. Acts as a negative regulator of the m-AAA protease. In Saccharomyces cerevisiae (strain ATCC 204508 / S288c) (Baker's yeast), this protein is Prohibitin-1 (PHB1).